A 96-amino-acid polypeptide reads, in one-letter code: Protein Vpr (96 aa).

The interval 1-42 (MEQAPEDQGPQREPYNEWALELLEELKNEAVRHFPRLWLHGL) is homooligomerization. A phosphoserine; by host mark is found at Ser79 and Ser96.

It belongs to the HIV-1 VPR protein family. Homooligomer, may form homodimer. Interacts with p6-gag region of the Pr55 Gag precursor protein through a (Leu-X-X)4 motif near the C-terminus of the P6gag protein. Interacts with host UNG. May interact with host RAD23A/HHR23A. Interacts with host VPRBP/DCAF1, leading to hijack the CUL4A-RBX1-DDB1-DCAF1/VPRBP complex, mediating ubiquitination of host proteins such as TERT and ZGPAT and arrest of the cell cycle in G2 phase. Phosphorylated on several residues by host. These phosphorylations regulate VPR activity for the nuclear import of the HIV-1 pre-integration complex.

It localises to the virion. Its subcellular location is the host nucleus. The protein localises to the host extracellular space. Its function is as follows. During virus replication, may deplete host UNG protein, and incude G2-M cell cycle arrest. Acts by targeting specific host proteins for degradation by the 26S proteasome, through association with the cellular CUL4A-DDB1 E3 ligase complex by direct interaction with host VPRPB/DCAF-1. Cell cycle arrest reportedly occurs within hours of infection and is not blocked by antiviral agents, suggesting that it is initiated by the VPR carried into the virion. Additionally, VPR induces apoptosis in a cell cycle dependent manner suggesting that these two effects are mechanistically linked. Detected in the serum and cerebrospinal fluid of AIDS patient, VPR may also induce cell death to bystander cells. Functionally, during virus entry, plays a role in the transport of the viral pre-integration (PIC) complex to the host nucleus. This function is crucial for viral infection of non-dividing macrophages. May act directly at the nuclear pore complex, by binding nucleoporins phenylalanine-glycine (FG)-repeat regions. This Human immunodeficiency virus type 1 group M subtype G (isolate SE6165) (HIV-1) protein is Protein Vpr.